Consider the following 198-residue polypeptide: Putative glutathione S-transferase alpha-2 (198 aa).

Ser-2 bears the N-acetylserine mark. Residues 5-81 enclose the GST N-terminal domain; it reads SVPSLTYFQG…YIAKKHNFMG (77 aa). Residues Tyr-11, Arg-45, 52–53, and 65–66 contribute to the glutathione site; these read QL and QS. Residues 83-198 form the GST C-terminal domain; the sequence is NLEEEFLVDQ…YIKERPETKF (116 aa).

Belongs to the GST superfamily. Alpha family.

It carries out the reaction RX + glutathione = an S-substituted glutathione + a halide anion + H(+). Conjugation of reduced glutathione to a wide number of exogenous and endogenous hydrophobic electrophiles. In Dictyostelium discoideum (Social amoeba), this protein is Putative glutathione S-transferase alpha-2 (gsta2-1).